Consider the following 369-residue polypeptide: MDENETQFNKLNQVKNKLKIGVFGIGGAGNNIVDASLYHYPNLASENIHFYAINSDLQHLAFKTNVKNKLLIQDHTNKGFGAGGDPAKGASLAISFQEQFNTLTDGYDFCILVAGFGKGTGTGATPVFSKILKTKKILNVAIVTYPSLNEGLTVRNKATKGLEILNKATDSYMLFCNEKCTNGIYQLANTEIVSAIKNLIELITIPLQQNIDFEDVRAFFQTKKTNQDQQLFTVTHPFSFSFDSKDSIEQFAKQFKNFEKVSYFDHSIVGAKKVLLKANINQKIVKLNFKQIQDIIWTKIDNYQLEIRLGVDFVTTIPNIQIFILSEHKNPVSLPIDNKSTENNQNKLKLLDELKELGMKYVKHQNQIY.

GTP-binding positions include 27-31 (GAGNN), 119-121 (GTG), glutamate 150, and asparagine 189.

It belongs to the FtsZ family. As to quaternary structure, homodimer. Polymerizes to form a dynamic ring structure in a strictly GTP-dependent manner. Interacts directly with several other division proteins.

The protein resides in the cytoplasm. Essential cell division protein that forms a contractile ring structure (Z ring) at the future cell division site. The regulation of the ring assembly controls the timing and the location of cell division. One of the functions of the FtsZ ring is to recruit other cell division proteins to the septum to produce a new cell wall between the dividing cells. Binds GTP and shows GTPase activity. This is Cell division protein FtsZ from Mycoplasma genitalium (strain ATCC 33530 / DSM 19775 / NCTC 10195 / G37) (Mycoplasmoides genitalium).